A 163-amino-acid chain; its full sequence is Seed allergenic protein RAG1 (163 aa).

The signal sequence occupies residues 1-27; it reads MASNKVVFSVLLLVVLSVLAAAMATMA. 5 disulfides stabilise this stretch: C39-C90, C53-C78, C61-C122, C79-C138, and C92-C150.

Belongs to the cereal trypsin/alpha-amylase inhibitor family. In terms of processing, five disulfide bonds are present.

It localises to the secreted. Its function is as follows. Seed storage protein. The protein is Seed allergenic protein RAG1 (RAG1) of Oryza sativa subsp. japonica (Rice).